A 1181-amino-acid polypeptide reads, in one-letter code: C5a peptidase (1181 aa).

The first 31 residues, 1 to 31 (MRKKQKLPFDKLAIALMSTSILLNAQSDIKA), serve as a signal peptide directing secretion. The span at 33–52 (TVTEDTPATEQAVETPQPTA) shows a compositional bias: polar residues. The interval 33 to 117 (TVTEDTPATE…PSQVKTLQEK (85 aa)) is disordered. A compositionally biased stretch (acidic residues) spans 70 to 81 (DDAEETIADDAN). The 483-residue stretch at 99–581 (KATIRDLNDP…AGAVDAKKAS (483 aa)) folds into the Peptidase S8 domain. Residues Asp130, His193, and Ser512 each act as charge relay system in the active site. Basic and acidic residues-rich tracts occupy residues 1029–1054 (EGHS…KPEQ), 1061–1071 (PDKKPETKPEQ), 1078–1088 (PDKKPETKPEQ), and 1095–1107 (PDKK…EKDS). Positions 1029–1150 (EGHSNKPEQD…KDQLPTTNDK (122 aa)) are disordered. Repeat copies occupy residues 1034-1050 (KPEQ…KPET), 1051-1067 (KPEQ…KPET), 1068-1084 (KPEQ…KPET), 1085-1101 (KPEQ…KPET), and 1102-1118 (KPEK…TPQK). Residues 1034 to 1118 (KPEQDGSDQA…GQTPGKTPQK (85 aa)) are 5 X 17 AA tandem repeats. Polar residues-rich tracts occupy residues 1109–1123 (GQTP…QPSR) and 1137–1147 (KASTKDQLPTT). The short motif at 1144 to 1148 (LPTTN) is the LPXTG sorting signal element. Thr1147 carries the post-translational modification Pentaglycyl murein peptidoglycan amidated threonine. Residues 1148–1181 (NDKDTNRLHLLKLVMTTFFLGLVAHIFKTKRTED) constitute a propeptide, removed by sortase.

It belongs to the peptidase S8 family. Cleaved by SpeB protease; leading to its degradation. Degradation by SpeB is probably strictly regulated to preserve integrity of C5a peptidase.

It localises to the secreted. The protein localises to the cell wall. The catalysed reaction is The primary cleavage site is at 67-His-|-Lys-68 in human C5a with a minor secondary cleavage site at 58-Ala-|-Ser-59.. Its function is as follows. This virulence factor of S.pyogenes specifically cleaves the human serum chemotaxin C5a at '68-Lys-|-Asp-69' bond near its C-terminus, destroying its ability to serve as a chemoattractant. This Streptococcus pyogenes serotype M1 protein is C5a peptidase (scpA).